A 73-amino-acid polypeptide reads, in one-letter code: Translation initiation factor IF-1 (73 aa).

The region spanning 1–73 is the S1-like domain; sequence MAKKEDTIVL…TKARVVYRHR (73 aa).

The protein belongs to the IF-1 family. As to quaternary structure, component of the 30S ribosomal translation pre-initiation complex which assembles on the 30S ribosome in the order IF-2 and IF-3, IF-1 and N-formylmethionyl-tRNA(fMet); mRNA recruitment can occur at any time during PIC assembly.

The protein resides in the cytoplasm. Functionally, one of the essential components for the initiation of protein synthesis. Stabilizes the binding of IF-2 and IF-3 on the 30S subunit to which N-formylmethionyl-tRNA(fMet) subsequently binds. Helps modulate mRNA selection, yielding the 30S pre-initiation complex (PIC). Upon addition of the 50S ribosomal subunit IF-1, IF-2 and IF-3 are released leaving the mature 70S translation initiation complex. The polypeptide is Translation initiation factor IF-1 (Chlamydia muridarum (strain MoPn / Nigg)).